Here is a 579-residue protein sequence, read N- to C-terminus: Adenine deaminase (579 aa).

This sequence belongs to the metallo-dependent hydrolases superfamily. Adenine deaminase family. The cofactor is Mn(2+).

The enzyme catalyses adenine + H2O + H(+) = hypoxanthine + NH4(+). In Listeria monocytogenes serotype 4b (strain F2365), this protein is Adenine deaminase.